We begin with the raw amino-acid sequence, 524 residues long: MTDKANNTPVAQDENKLIAERRVKLEKIRSNCSANGFPNDFNREHLAADIQAEHGEKTKEELEELQVTYAIAGRVMAKRGPFLVIQDSSGRIQGYAEKTVQKEIRAKWGSLDIGDIVGIKGILHKSGKGDLYVNMDHYSLLTKSLRPLPEKFHGLSDQETKYRQRYIDLIINEDTRNTFKMRSKIVAGIRNFLTQRDFMEVETPMLQIIPGGATAKPFMTHHNTFDLDMYLRIAPELNLKRLVVGGFDRVFEINRSFRNEGISTRHNPEFTMIEFYQAYADYHDLMNTTEEMLRTIAQDVLGTTTIRNTVKNSEGEVVEEKFYDLGKPFVRLSMVDAILQYGKDHRGAEQLDEAALRDPENNFDAIKAMAKAVGVKENSASKVWGPGKYICEIFEEVAEHLLDQPTFITEYPWEVSPLARRNDENSFITDRFEFFVGGRELANGFSELNDAEDQAERFQKQVAEKDAGDDEAMHYDADYINALEYGLPPTAGEGIGIDRLVMLFTDSPTIKDVILFPHMRPEAE.

Mg(2+) is bound by residues E433 and E440.

This sequence belongs to the class-II aminoacyl-tRNA synthetase family. Homodimer. The cofactor is Mg(2+).

The protein localises to the cytoplasm. It carries out the reaction tRNA(Lys) + L-lysine + ATP = L-lysyl-tRNA(Lys) + AMP + diphosphate. The chain is Lysine--tRNA ligase from Colwellia psychrerythraea (strain 34H / ATCC BAA-681) (Vibrio psychroerythus).